A 78-amino-acid chain; its full sequence is Acyl carrier protein (78 aa).

The Carrier domain occupies 2–77 (SDIEQRVKQA…SAIDYVTKKL (76 aa)). Serine 37 bears the O-(pantetheine 4'-phosphoryl)serine mark.

The protein belongs to the acyl carrier protein (ACP) family. Post-translationally, 4'-phosphopantetheine is transferred from CoA to a specific serine of apo-ACP by AcpS. This modification is essential for activity because fatty acids are bound in thioester linkage to the sulfhydryl of the prosthetic group.

It localises to the cytoplasm. The protein operates within lipid metabolism; fatty acid biosynthesis. Carrier of the growing fatty acid chain in fatty acid biosynthesis. This is Acyl carrier protein from Acinetobacter baylyi (strain ATCC 33305 / BD413 / ADP1).